A 265-amino-acid chain; its full sequence is U6 snRNA phosphodiesterase 1 (265 aa).

The interval 1-22 (MSLVCYESSSSGEDDDETISDN) is disordered. The active-site Proton acceptor is His109. AMP is bound by residues 109–111 (HLS) and 195–201 (DFLLHIS). A UMP-binding site is contributed by 197 to 201 (LLHIS). The active-site Proton donor is the His199.

The protein belongs to the 2H phosphoesterase superfamily. USB1 family.

It localises to the nucleus. The enzyme catalyses a 3'-end uridylyl-uridine-RNA = a 3'-end 2',3'-cyclophospho-uridine-RNA + uridine. In terms of biological role, 3'-5' RNA exonuclease that trims the 3' end of oligo(U) tracts of the pre-U6 small nuclear RNA (snRNA) molecule, leading to the formation of a U6 snRNA 3' end-terminated with a 2',3'-cyclic phosphate.d. Participates in the U6 snRNA 3' end processing that prevents U6 snRNA degradation. This is U6 snRNA phosphodiesterase 1 from Schizosaccharomyces pombe (strain 972 / ATCC 24843) (Fission yeast).